The primary structure comprises 66 residues: ATP synthase F(0) complex subunit 8 (66 aa).

A helical membrane pass occupies residues 8-24 (TWLTMILSMFLVLFIIF). K54 carries the post-translational modification N6-acetyllysine; alternate. At K54 the chain carries N6-succinyllysine; alternate. K57 bears the N6-acetyllysine mark.

It belongs to the ATPase protein 8 family. In terms of assembly, component of the ATP synthase complex composed at least of ATP5F1A/subunit alpha, ATP5F1B/subunit beta, ATP5MC1/subunit c (homooctomer), MT-ATP6/subunit a, MT-ATP8/subunit 8, ATP5ME/subunit e, ATP5MF/subunit f, ATP5MG/subunit g, ATP5MK/subunit k, ATP5MJ/subunit j, ATP5F1C/subunit gamma, ATP5F1D/subunit delta, ATP5F1E/subunit epsilon, ATP5PF/subunit F6, ATP5PB/subunit b, ATP5PD/subunit d, ATP5PO/subunit OSCP. ATP synthase complex consists of a soluble F(1) head domain (subunits alpha(3) and beta(3)) - the catalytic core - and a membrane F(0) domain - the membrane proton channel (subunits c, a, 8, e, f, g, k and j). These two domains are linked by a central stalk (subunits gamma, delta, and epsilon) rotating inside the F1 region and a stationary peripheral stalk (subunits F6, b, d, and OSCP). Interacts with PRICKLE3.

It is found in the mitochondrion membrane. In terms of biological role, subunit 8, of the mitochondrial membrane ATP synthase complex (F(1)F(0) ATP synthase or Complex V) that produces ATP from ADP in the presence of a proton gradient across the membrane which is generated by electron transport complexes of the respiratory chain. ATP synthase complex consist of a soluble F(1) head domain - the catalytic core - and a membrane F(1) domain - the membrane proton channel. These two domains are linked by a central stalk rotating inside the F(1) region and a stationary peripheral stalk. During catalysis, ATP synthesis in the catalytic domain of F(1) is coupled via a rotary mechanism of the central stalk subunits to proton translocation. In vivo, can only synthesize ATP although its ATP hydrolase activity can be activated artificially in vitro. Part of the complex F(0) domain. The chain is ATP synthase F(0) complex subunit 8 from Ovis aries (Sheep).